A 624-amino-acid polypeptide reads, in one-letter code: Dihydroxy-acid dehydratase (624 aa).

Asp-81 serves as a coordination point for Mg(2+). Cys-122 lines the [2Fe-2S] cluster pocket. Mg(2+)-binding residues include Asp-123 and Lys-124. The residue at position 124 (Lys-124) is an N6-carboxylysine. Residue Cys-195 participates in [2Fe-2S] cluster binding. Position 499 (Glu-499) interacts with Mg(2+). Catalysis depends on Ser-525, which acts as the Proton acceptor.

Belongs to the IlvD/Edd family. In terms of assembly, homodimer. Requires [2Fe-2S] cluster as cofactor. The cofactor is Mg(2+).

The enzyme catalyses (2R)-2,3-dihydroxy-3-methylbutanoate = 3-methyl-2-oxobutanoate + H2O. The catalysed reaction is (2R,3R)-2,3-dihydroxy-3-methylpentanoate = (S)-3-methyl-2-oxopentanoate + H2O. It functions in the pathway amino-acid biosynthesis; L-isoleucine biosynthesis; L-isoleucine from 2-oxobutanoate: step 3/4. The protein operates within amino-acid biosynthesis; L-valine biosynthesis; L-valine from pyruvate: step 3/4. Functions in the biosynthesis of branched-chain amino acids. Catalyzes the dehydration of (2R,3R)-2,3-dihydroxy-3-methylpentanoate (2,3-dihydroxy-3-methylvalerate) into 2-oxo-3-methylpentanoate (2-oxo-3-methylvalerate) and of (2R)-2,3-dihydroxy-3-methylbutanoate (2,3-dihydroxyisovalerate) into 2-oxo-3-methylbutanoate (2-oxoisovalerate), the penultimate precursor to L-isoleucine and L-valine, respectively. The protein is Dihydroxy-acid dehydratase of Shewanella baltica (strain OS185).